The chain runs to 378 residues: Lipid-A-disaccharide synthase (378 aa).

This sequence belongs to the LpxB family.

The enzyme catalyses a lipid X + a UDP-2-N,3-O-bis[(3R)-3-hydroxyacyl]-alpha-D-glucosamine = a lipid A disaccharide + UDP + H(+). It participates in bacterial outer membrane biogenesis; LPS lipid A biosynthesis. Its function is as follows. Condensation of UDP-2,3-diacylglucosamine and 2,3-diacylglucosamine-1-phosphate to form lipid A disaccharide, a precursor of lipid A, a phosphorylated glycolipid that anchors the lipopolysaccharide to the outer membrane of the cell. This is Lipid-A-disaccharide synthase from Pseudomonas aeruginosa (strain LESB58).